The primary structure comprises 1106 residues: Solute carrier family 12 member 7 (1106 aa).

Over 1 to 143 (MVYTALTWQR…PRESKAPCMG (143 aa)) the chain is Cytoplasmic. Residues 17 to 83 (GLVPSHLPQE…SPFIGSAAAD (67 aa)) form a disordered region. Ser-74 and Ser-86 each carry phosphoserine. Residues 144–166 (TFIGVYLPCLQNILGVILFLRLT) form a discontinuously helical membrane-spanning segment. The K(+) site is built by Asn-155 and Ile-156. Position 159 (Val-159) interacts with chloride. The Extracellular segment spans residues 167–173 (WIVGAAG). A helical transmembrane segment spans residues 174–196 (VLESFLVVSMCCTCTMLTAVSMS). The Cytoplasmic segment spans residues 197 to 220 (AIATNGVVPAGGSYYMISRSLGPE). The helical transmembrane segment at 221 to 249 (FGGAVGLCFYLGTTFAGAMYILGTIEIFL) threads the bilayer. Topologically, residues 250–273 (TYISPGAAVFQAETPEGEAAALLH) are extracellular. The next 2 membrane-spanning stretches (helical) occupy residues 274 to 295 (NMRVYGSCTLALMAVVVFVGVK) and 296 to 324 (YVNKLALVFLACVVLSILAIYAGVIKTAF). Topologically, residues 325-443 (DPPDIPVCLL…PYVLSDITTY (119 aa)) are extracellular. N-linked (GlcNAc...) asparagine glycans are attached at residues Asn-336, Asn-355, and Asn-384. Residues 444–464 (FTVLVGIYFPSVTGIMAGSNR) traverse the membrane as a helical segment. K(+) is bound by residues Pro-453 and Thr-456. Pro-453 provides a ligand contact to chloride. Gly-457 and Ile-458 together coordinate chloride. Residues 465 to 474 (SGDLKDAQKS) are Cytoplasmic-facing. A helical membrane pass occupies residues 475–497 (IPTGTILAIVTTSFIYLSCIVLF). Residues 498-528 (GACIEGVVLRDKFGEALQGNLVIGMLAWPSP) are Extracellular-facing. The helical transmembrane segment at 529-555 (WVIVIGSFFSTCGAGLQSLTGAPRLLQ) threads the bilayer. Over 556–578 (AIARDGIVPFLQVFGHGKANGEP) the chain is Cytoplasmic. 2 consecutive transmembrane segments (helical) span residues 579 to 597 (TWALLLTALICETGILIAS) and 598 to 622 (LDSVAPILSMFFLMCYMFVNLACAV). Tyr-613 is a chloride binding site. The Cytoplasmic portion of the chain corresponds to 623–636 (QTLLRTPNWRPRFK). 2 consecutive transmembrane segments (helical) span residues 637-659 (YYHWTLSFLGMSLCLALMFICSW) and 660-675 (YYALFAMLIAGCIYKY). Topologically, residues 676 to 1106 (IEYRGAEKEW…GGREVITIYS (431 aa)) are cytoplasmic. The interval 688-704 (GIRGLSLNAARYALLRV) is scissor helix. Residues 980-999 (RNTASHTAASRAQAPPTPDK) are disordered. 2 positions are modified to phosphothreonine: Thr-996 and Thr-1003.

This sequence belongs to the SLC12A transporter family. K/Cl co-transporter subfamily. Homodimer; adopts a domain-swap conformation at the scissor helices connecting the transmembrane domain and C-terminal domain. Heterodimer with K-Cl cotransporter SLC12A5. As to expression, widely expressed. Higher levels in heart, kidney and lung (at protein level).

It is found in the cell membrane. The enzyme catalyses K(+)(in) + chloride(in) = K(+)(out) + chloride(out). Its activity is regulated as follows. Activated by N-ethylmaleimide (NEM). Inhibited by furosemide, DIDS and bumetanide. The inhibition is much stronger in the presence of 50 mM K(+) in the uptake medium. Inhibited by DIOA. Inhibited by WNK3. Functionally, mediates electroneutral potassium-chloride cotransport when activated by cell swelling. May mediate K(+) uptake into Deiters' cells in the cochlea and contribute to K(+) recycling in the inner ear. Important for the survival of cochlear outer and inner hair cells and the maintenance of the organ of Corti. May be required for basolateral Cl(-) extrusion in the kidney and contribute to renal acidification. The protein is Solute carrier family 12 member 7 of Oryctolagus cuniculus (Rabbit).